A 144-amino-acid polypeptide reads, in one-letter code: Transcription antitermination protein NusB (144 aa).

Belongs to the NusB family.

Functionally, involved in transcription antitermination. Required for transcription of ribosomal RNA (rRNA) genes. Binds specifically to the boxA antiterminator sequence of the ribosomal RNA (rrn) operons. The protein is Transcription antitermination protein NusB of Dictyoglomus thermophilum (strain ATCC 35947 / DSM 3960 / H-6-12).